Here is a 372-residue protein sequence, read N- to C-terminus: Ligninase A (372 aa).

The signal sequence occupies residues methionine 1–alanine 21. A propeptide spanning residues alanine 22–arginine 28 is cleaved from the precursor. 4 disulfides stabilise this stretch: cysteine 31–cysteine 43, cysteine 42–cysteine 313, cysteine 62–cysteine 148, and cysteine 277–cysteine 345. Histidine 75 (proton acceptor) is an active-site residue. Ca(2+)-binding residues include aspartate 76, glycine 94, aspartate 96, and serine 98. Position 204 (histidine 204) interacts with heme b. Residues serine 205, aspartate 222, threonine 224, isoleucine 227, and aspartate 229 each contribute to the Ca(2+) site. Residue asparagine 285 is glycosylated (N-linked (GlcNAc...) asparagine).

It belongs to the peroxidase family. Ligninase subfamily. Requires heme b as cofactor. Ca(2+) serves as cofactor.

The enzyme catalyses 1-(3,4-dimethoxyphenyl)-2-(2-methoxyphenoxy)propane-1,3-diol + H2O2 = 3,4-dimethoxybenzaldehyde + guaiacol + glycolaldehyde + H2O. It catalyses the reaction 2 (3,4-dimethoxyphenyl)methanol + H2O2 = 2 (3,4-dimethoxyphenyl)methanol radical + 2 H2O. It functions in the pathway secondary metabolite metabolism; lignin degradation. Its function is as follows. Depolymerization of lignin. Catalyzes the C(alpha)-C(beta) cleavage of the propyl side chains of lignin. The protein is Ligninase A (LIPA) of Phanerodontia chrysosporium (White-rot fungus).